A 520-amino-acid polypeptide reads, in one-letter code: Cytochrome P450 monooxygenase vrtE (520 aa).

Residues 16 to 36 traverse the membrane as a helical segment; sequence ALSLLHYVLGAIFLLLLFHML. Asn-137 is a glycosylation site (N-linked (GlcNAc...) asparagine). Heme is bound at residue Cys-459.

This sequence belongs to the cytochrome P450 family. It depends on heme as a cofactor.

Its subcellular location is the membrane. Its pathway is secondary metabolite biosynthesis; terpenoid biosynthesis. Functionally, cytochrome P450 monooxygenase; part of the gene cluster that mediates the biosynthesis of viridicatumtoxin, a tetracycline-like fungal meroterpenoid with a unique, fused spirobicyclic ring system. The first step of the pathway is the production of the malonamoyl-CoA starter unit for the polyketide synthase vrtA. The aldolase vrtJ may be involved in the synthesis of the malonamate substrate for malonamoyl-CoA synthetase vrtB. The polyketide synthase vrtA then may utilize the malonamoyl-CoA starter unit, followed by sequential condensation of eight malonyl-CoA units to form the polyketide backbone. The cyclization of the last ring could be mediated by the lactamase-like protein vrtG. The proposed post-PKS tailoring steps are a hydroxylation at C5 catalyzed the cytochrome P450 monooxygenase vrtE, a hydroxylation at C12a catalyzed by VrtH and/or VrtI, and an O-methylation by the O-methyltransferase vrtF. VrtC is then proposed to catalyze the transfer of a geranyl group synthesized by vrtD to the aromatic C ring of the tetracyclic polyketide intermediate of viridicatumtoxin to yield previridicatumtoxin. Finally, the cytochrome P450 monooxygenase vrtK catalyzes the spirocyclization of the geranyl moiety of previridicatumtoxin to afford viridicatumtoxin. In Penicillium aethiopicum, this protein is Cytochrome P450 monooxygenase vrtE.